A 1871-amino-acid polypeptide reads, in one-letter code: MPSVCLLLLLFLAVGGALGNRPFRAFVVTDTTLTHLAVHRVTGEVFVGAVNRVFKLAPNLTELRAHVTGPVEDNARCYPPPSMRVCAHRLAPVDNINKLLLIDYAARRLVACGSIWQGICQFLRLDDLFKLGEPHHRKEHYLSGAQEPDSMAGVIVEQGQGPSKLFVGTAVDGKSEYFPTLSSRKLISDEDSADMFSLVYQDEFVSSQIKIPSDTLSLYPAFDIYYIYGFVSASFVYFLTLQLDTQQTLLDTAGEKFFTSKIVRMCAGDSEFYSYVEFPIGCSWRGVEYRLVQSAHLAKPGLLLAQALGVPADEDVLFTIFSQGQKNRASPPRQTILCLFTLSNINAHIRRRIQSCYRGEGTLALPWLLNKELPCINTPMQINGNFCGLVLNQPLGGLHVIEGLPLLADSTDGMASVAAYTYRQHSVVFIGTRSGSLKKVRVDGFQDAHLYETVPVVDGSPILRDLLFSPDHRHIYLLSEKQVSQLPVETCEQYQSCAACLGSGDPHCGWCVLRHRCCREGACLGASAPHGFAEELSKCVQVRVRPNNVSVTSPGVQLTVTLHNVPDLSAGVSCAFEAAAENEAVLLPSGELLCPSPSLQELRALTRGHGATRTVRLQLLSKETGVRFAGADFVFYNCSVLQSCMSCVGSPYPCHWCKYRHTCTSRPHECSFQEGRVHSPEGCPEILPSGDLLIPVGVMQPLTLRAKNLPQPQSGQKNYECVVRVQGRQQRVPAVRFNSSSVQCQNASYSYEGDEHGDTELDFSVVWDGDFPIDKPPSFRALLYKCWAQRPSCGLCLKADPRFNCGWCISEHRCQLRTHCPAPKTNWMHLSQKGTRCSHPRITQIHPLVGPKEGGTRVTIVGENLGLLSREVGLRVAGVRCNSIPAEYISAERIVCEMEESLVPSPPPGPVELCVGDCSADFRTQSEQVYSFVTPTFDQVSPSRGPASGGTRLTISGSSLDAGSRVTVTVRDSECQFVRRDAKAIVCISPLSTLGPSQAPITLAIDRANISSPGLIYTYTQDPTVTRLEPTWSIINGSTAITVSGTHLLTVQEPRVRAKYRGIETTNTCQVINDTAMLCKAPGIFLGRPQPRAQGEHPDEFGFLLDHVQTARSLNRSSFTYYPDPSFEPLGPSGVLDVKPGSHVVLKGKNLIPAAAGSSRLNYTVLIGGQPCSLTVSDTQLLCDSPSQTGRQPVMVLVGGLEFWLGTLHISAERALTLPAMMGLAAGGGLLLLAITAVLVAYKRKTQDADRTLKRLQLQMDNLESRVALECKEAFAELQTDINELTNHMDEVQIPFLDYRTYAVRVLFPGIEAHPVLKELDTPPNVEKALRLFGQLLHSRAFVLTFIHTLEAQSSFSMRDRGTVASLTMVALQSRLDYATGLLKQLLADLIEKNLESKNHPKLLLRRTESVAEKMLTNWFTFLLHKFLKECAGEPLFLLYCAIKQQMEKGPIDAITGEARYSLSEDKLIRQQIDYKTLTLHCVCPENEGSAQVPVKVLNCDSITQAKDKLLDTVYKGIPYSQRPKAEDMDLEWRQGRMTRIILQDEDVTTKIECDWKRLNSLAHYQVTDGSLVALVPKQVSAYNMANSFTFTRSLSRYESLLRTASSPDSLRSRAPMITPDQETGTKLWHLVKNHDHADHREGDRGSKMVSEIYLTRLLATKGTLQKFVDDLFETVFSTAHRGSALPLAIKYMFDFLDEQADQRQISDPDVRHTWKSNCLPLRFWVNVIKNPQFVFDIHKNSITDACLSVVAQTFMDSCSTSEHRLGKDSPSNKLLYAKDIPNYKSWVERYYRDIAKMASISDQDMDAYLVEQSRLHASDFSVLSALNELYFYVTKYRQEILTALDRDASCRKHKLRQKLEQIISLVSSDS.

An N-terminal signal peptide occupies residues 1 to 19 (MPSVCLLLLLFLAVGGALG). One can recognise a Sema domain in the interval 20 to 488 (NRPFRAFVVT…SEKQVSQLPV (469 aa)). Topologically, residues 20–1220 (NRPFRAFVVT…SAERALTLPA (1201 aa)) are extracellular. An N-linked (GlcNAc...) asparagine glycan is attached at Asn59. 9 cysteine pairs are disulfide-bonded: Cys77-Cys86, Cys112-Cys120, Cys266-Cys387, Cys282-Cys338, Cys356-Cys375, Cys491-Cys508, Cys497-Cys539, Cys500-Cys517, and Cys511-Cys523. An N-linked (GlcNAc...) asparagine glycan is attached at Asn548. A disulfide bond links Cys574 and Cys594. N-linked (GlcNAc...) asparagine glycosylation is found at Asn637, Asn738, and Asn746. IPT/TIG domains follow at residues 840-933 (PRIT…YSFV), 935-1020 (PTFD…YTYT), 1023-1122 (PTVT…FTYY), and 1125-1211 (PSFE…LHIS). N-linked (GlcNAc...) asparagine glycosylation is found at Asn1009, Asn1036, Asn1073, Asn1115, and Asn1162. The helical transmembrane segment at 1221-1241 (MMGLAAGGGLLLLAITAVLVA) threads the bilayer. Topologically, residues 1242 to 1871 (YKRKTQDADR…QIISLVSSDS (630 aa)) are cytoplasmic. Phosphoserine is present on Ser1596.

The protein belongs to the plexin family. Interacts with CBFA2T3/MTG16.

The protein resides in the cell membrane. Coreceptor for SEMA3A and SEMA3F. Necessary for signaling by class 3 semaphorins and subsequent remodeling of the cytoskeleton. Plays a role in axon guidance in the developing nervous system. Regulates the migration of sympathetic neurons, but not of neural crest precursors. Required for normal dendrite spine morphology in pyramidal neurons. May play a role in regulating semaphorin-mediated programmed cell death in the developing nervous system. Class 3 semaphorins bind to a complex composed of a neuropilin and a plexin. The plexin modulates the affinity of the complex for specific semaphorins, and its cytoplasmic domain is required for the activation of down-stream signaling events in the cytoplasm. The sequence is that of Plexin-A3 (PLXNA3) from Homo sapiens (Human).